The following is a 467-amino-acid chain: E3 ubiquitin-protein ligase IE61 (467 aa).

The RING-type zinc finger occupies 19–58; the sequence is CTICMSTVSDLGKTMPCLHDFCFVCIRAWTSTSVQCPLCR. 4 disordered regions span residues 101–171, 205–238, 344–364, and 413–467; these read GDVI…GVTK, QQPR…FRAT, IVRP…RDTR, and DSAC…MKKS. The span at 116 to 143 shows a compositional bias: polar residues; sequence ESIQQPTSRSSREPIQSPNPGPLQSSAR. Positions 149–161 are enriched in low complexity; sequence SPSDSQQDSIQPP. Positions 162 to 171 are enriched in polar residues; sequence TRDSSPGVTK. Over residues 228–238 the composition is skewed to basic and acidic residues; the sequence is RTMDRLPFRAT. 2 stretches are compositionally biased toward low complexity: residues 429–443 and 450–459; these read GESN…TSGS and KSSAGKAGKG.

As to quaternary structure, interacts with host BTRC; this interaction seems to inactivate SCF-mediated protein degradation in general. In terms of processing, auto-ubiquitinated.

It catalyses the reaction S-ubiquitinyl-[E2 ubiquitin-conjugating enzyme]-L-cysteine + [acceptor protein]-L-lysine = [E2 ubiquitin-conjugating enzyme]-L-cysteine + N(6)-ubiquitinyl-[acceptor protein]-L-lysine.. RING-finger E3 ubiquitin ligase that degrades host SP100, one of the major components of ND10 nuclear bodies, thereby disrupting the organization of these bodies. Also plays a role in the inhibition of host NF-kappa-B pathway by blocking the SCF(BTRC)-mediated addition of ubiquitin chains to host I-kappa-B-alpha/NFKBIA, thereby interfering with its degradation. The protein is E3 ubiquitin-protein ligase IE61 (61) of Varicella-zoster virus (strain Dumas) (HHV-3).